The chain runs to 267 residues: 4-hydroxy-tetrahydrodipicolinate reductase (267 aa).

Residues 10 to 15 (GCGGRM) and Glu36 contribute to the NAD(+) site. An NADP(+)-binding site is contributed by Arg37. NAD(+)-binding positions include 99–101 (GTT) and 123–126 (APNF). The active-site Proton donor/acceptor is His156. His157 provides a ligand contact to (S)-2,3,4,5-tetrahydrodipicolinate. The active-site Proton donor is Lys160. Residue 166-167 (GT) coordinates (S)-2,3,4,5-tetrahydrodipicolinate.

It belongs to the DapB family.

It is found in the cytoplasm. The catalysed reaction is (S)-2,3,4,5-tetrahydrodipicolinate + NAD(+) + H2O = (2S,4S)-4-hydroxy-2,3,4,5-tetrahydrodipicolinate + NADH + H(+). It catalyses the reaction (S)-2,3,4,5-tetrahydrodipicolinate + NADP(+) + H2O = (2S,4S)-4-hydroxy-2,3,4,5-tetrahydrodipicolinate + NADPH + H(+). It functions in the pathway amino-acid biosynthesis; L-lysine biosynthesis via DAP pathway; (S)-tetrahydrodipicolinate from L-aspartate: step 4/4. In terms of biological role, catalyzes the conversion of 4-hydroxy-tetrahydrodipicolinate (HTPA) to tetrahydrodipicolinate. The sequence is that of 4-hydroxy-tetrahydrodipicolinate reductase from Laribacter hongkongensis (strain HLHK9).